A 312-amino-acid polypeptide reads, in one-letter code: MKKEIIIGTRSSPLALWQAEFTKAELSKRFPDMNITLKLVKTTGDVLLDSPLSKIGDMGLFTKDIEKHLLAGEIDLAVHSLKDVPTGTPEGLVITSFTEREDTRDVIISKSGKGLMDLPQNAKMATSSLRRMSQLLSLRPDLEIMDIRGNLNTRFKKFDEGDFDAMMLAYAGVYRLEFSDRITEILPHETMLPAVGQGALGIETRTDDAETREIVRVLNDDNTEMCCRAERALLRHLQGGCQIPIGSFGSYIDGTLKLLAFVGSVDGKTGLRNEVTKAVKTPEEAEAVGIELAEILLSMGAEKILADIRKTC.

Cys-241 is modified (S-(dipyrrolylmethanemethyl)cysteine).

Belongs to the HMBS family. Monomer. Requires dipyrromethane as cofactor.

The catalysed reaction is 4 porphobilinogen + H2O = hydroxymethylbilane + 4 NH4(+). It functions in the pathway porphyrin-containing compound metabolism; protoporphyrin-IX biosynthesis; coproporphyrinogen-III from 5-aminolevulinate: step 2/4. The protein operates within porphyrin-containing compound metabolism; chlorophyll biosynthesis. Its function is as follows. Tetrapolymerization of the monopyrrole PBG into the hydroxymethylbilane pre-uroporphyrinogen in several discrete steps. In Chlorobaculum parvum (strain DSM 263 / NCIMB 8327) (Chlorobium vibrioforme subsp. thiosulfatophilum), this protein is Porphobilinogen deaminase (hemC).